The sequence spans 141 residues: Large ribosomal subunit protein uL11 (141 aa).

The protein belongs to the universal ribosomal protein uL11 family. As to quaternary structure, part of the ribosomal stalk of the 50S ribosomal subunit. Interacts with L10 and the large rRNA to form the base of the stalk. L10 forms an elongated spine to which L12 dimers bind in a sequential fashion forming a multimeric L10(L12)X complex. Post-translationally, one or more lysine residues are methylated.

In terms of biological role, forms part of the ribosomal stalk which helps the ribosome interact with GTP-bound translation factors. This chain is Large ribosomal subunit protein uL11, found in Aster yellows witches'-broom phytoplasma (strain AYWB).